We begin with the raw amino-acid sequence, 644 residues long: Subversion of eukaryotic traffic protein A (644 aa).

The segment at 1–400 (MYKIYSYLGW…FHTLLSQVSD (400 aa)) is glucosyltransferase. The segment at 401 to 644 (PVNPTAHELK…EYDNNHGLRI (244 aa)) is ptdIns(3)P-binding and localization domain.

In terms of processing, ubiquitinated and polyubiquitinated when ectopically produced in both yeast and mammalian cells; however it is unsure if this modification occurs during the L.pneumophila infection of host cells.

The protein resides in the secreted. Its function is as follows. Secreted effector that interferes with vesicular trafficking of host cells. Possesses glucohydrolase and mono-O-glucosyltransferase activity by using UDP-glucose as a sugar donor substrate. Is able to glucosylate histones H4 and H3.1 in vitro, but it is unlikely that histones are the natural substrates for SetA. May glycosylate a component of the host cell vesicle trafficking machinery during L.pneumophila infection. Binds with high specificity to phosphatidylinositol 3-phosphate (PtdIns(3)P), (with a dissociation constant value of 809 nM), which guides SetA to the cytosolic leaflet of the early phagosome of the host cell. This is Subversion of eukaryotic traffic protein A (setA) from Legionella pneumophila subsp. pneumophila (strain Philadelphia 1 / ATCC 33152 / DSM 7513).